A 405-amino-acid chain; its full sequence is Tryptophan synthase beta chain (405 aa).

At Lys98 the chain carries N6-(pyridoxal phosphate)lysine.

It belongs to the TrpB family. In terms of assembly, tetramer of two alpha and two beta chains. The cofactor is pyridoxal 5'-phosphate.

The enzyme catalyses (1S,2R)-1-C-(indol-3-yl)glycerol 3-phosphate + L-serine = D-glyceraldehyde 3-phosphate + L-tryptophan + H2O. It functions in the pathway amino-acid biosynthesis; L-tryptophan biosynthesis; L-tryptophan from chorismate: step 5/5. In terms of biological role, the beta subunit is responsible for the synthesis of L-tryptophan from indole and L-serine. This Xanthomonas euvesicatoria pv. vesicatoria (strain 85-10) (Xanthomonas campestris pv. vesicatoria) protein is Tryptophan synthase beta chain.